The sequence spans 166 residues: MTDKFPEDVKFLYIAYTPAKADITACGIPIPLDFDKEFRDKTVVIVAIPGAFTPTCTANHIPPFVEKFTALKSAGVDAVIVLSANDPFVQSAFGKALGVTDEAFIFASDPGAEFSKSAGLSLDLPPAFGTRTARYAIIVSNGVVKYVEKDSEGVAGSGVDAVLAAL.

Residues 5–166 (FPEDVKFLYI…SGVDAVLAAL (162 aa)) form the Thioredoxin domain. Cys-56 (cysteine sulfenic acid (-SOH) intermediate) is an active-site residue.

Belongs to the peroxiredoxin family. Prx5 subfamily. Homodimer; disulfide-linked, upon oxidation.

The catalysed reaction is a hydroperoxide + [protein]-dithiol = [protein]-disulfide + an alcohol + H2O. Its function is as follows. Thiol-specific peroxidase that catalyzes the reduction of hydrogen peroxide and organic hydroperoxides to water and alcohols, respectively. Plays a role in cell protection against oxidative stress by detoxifying peroxides and as sensor of hydrogen peroxide-mediated signaling events. The chain is Putative peroxisomal peroxiredoxin from Lipomyces kononenkoae (Yeast).